The sequence spans 37 residues: Cytochrome b6-f complex subunit 5 (37 aa).

A helical transmembrane segment spans residues 5–25; sequence LLCGIVLGLIPITLAGLFVAA.

It belongs to the PetG family. As to quaternary structure, the 4 large subunits of the cytochrome b6-f complex are cytochrome b6, subunit IV (17 kDa polypeptide, PetD), cytochrome f and the Rieske protein, while the 4 small subunits are PetG, PetL, PetM and PetN. The complex functions as a dimer.

The protein resides in the cellular thylakoid membrane. Its function is as follows. Component of the cytochrome b6-f complex, which mediates electron transfer between photosystem II (PSII) and photosystem I (PSI), cyclic electron flow around PSI, and state transitions. PetG is required for either the stability or assembly of the cytochrome b6-f complex. In Cyanothece sp. (strain PCC 7425 / ATCC 29141), this protein is Cytochrome b6-f complex subunit 5.